The primary structure comprises 255 residues: uncharacterized protein (255 aa).

[4Fe-4S] cluster is bound by residues Cys-122 and Cys-160.

As to quaternary structure, homodimer. Requires [4Fe-4S] cluster as cofactor.

This is an uncharacterized protein from Escherichia coli (strain K12).